The following is a 1015-amino-acid chain: DNA polymerase catalytic subunit (1015 aa).

It belongs to the DNA polymerase type-B family. As to quaternary structure, forms a complex with the ssDNA-binding protein BALF2, the DNA polymerase processivity factor BMRF1, and the alkaline exonuclease BGLF5. Interacts with the putative helicase-primase complex composed of BBLF4, BSLF1 and BBLF2/3 proteins; these interactions may coordinate leading and lagging strand DNA synthesis at the replication fork.

It is found in the host nucleus. It catalyses the reaction DNA(n) + a 2'-deoxyribonucleoside 5'-triphosphate = DNA(n+1) + diphosphate. Replicates viral genomic DNA in the late phase of lytic infection, producing long concatemeric DNA. The replication complex is composed of six viral proteins: the DNA polymerase, processivity factor, primase, primase-associated factor, helicase, and ssDNA-binding protein. In Epstein-Barr virus (strain B95-8) (HHV-4), this protein is DNA polymerase catalytic subunit.